A 548-amino-acid polypeptide reads, in one-letter code: Membrane protein insertase YidC (548 aa).

A helical transmembrane segment spans residues 6–26; the sequence is NLLVIALLFVSFMIWQAWEQD. Positions 28–55 are disordered; sequence NPQPQAQQTTQTTTTAAGSAADQGVPAS. The segment covering 30–50 has biased composition (low complexity); the sequence is QPQAQQTTQTTTTAAGSAADQ. Transmembrane regions (helical) follow at residues 350 to 370, 420 to 440, 458 to 478, and 499 to 519; these read FVGNWGFSIIIITFIVRGIMY, LGGCFPLLIQMPIFLALYYML, LSAQDPYYILPILMGVTMFFI, and PVIFTVFFLWFPSGLVLYYIV.

The protein belongs to the OXA1/ALB3/YidC family. Type 1 subfamily. As to quaternary structure, interacts with the Sec translocase complex via SecD. Specifically interacts with transmembrane segments of nascent integral membrane proteins during membrane integration.

Its subcellular location is the cell inner membrane. Required for the insertion and/or proper folding and/or complex formation of integral membrane proteins into the membrane. Involved in integration of membrane proteins that insert both dependently and independently of the Sec translocase complex, as well as at least some lipoproteins. Aids folding of multispanning membrane proteins. This is Membrane protein insertase YidC from Escherichia coli (strain K12 / MC4100 / BW2952).